Reading from the N-terminus, the 688-residue chain is Potassium-transporting ATPase ATP-binding subunit (688 aa).

4 consecutive transmembrane segments (helical) span residues 35–55 (VMFV…AMLA), 62–82 (ALFT…ANFA), 219–239 (IALT…CVTL), and 260–280 (VLIA…LSAI). The 4-aspartylphosphate intermediate role is filled by Asp-313. ATP contacts are provided by residues Asp-350, Glu-354, 383-390 (FSAMTRMS), and Lys-401. Residues Asp-524 and Asp-528 each coordinate Mg(2+). The next 3 helical transmembrane spans lie at 594-614 (FAII…LNIM), 622-642 (AVLS…PLAL), and 667-687 (GLIA…LLIL).

This sequence belongs to the cation transport ATPase (P-type) (TC 3.A.3) family. Type IA subfamily. The system is composed of three essential subunits: KdpA, KdpB and KdpC.

Its subcellular location is the cell inner membrane. The enzyme catalyses K(+)(out) + ATP + H2O = K(+)(in) + ADP + phosphate + H(+). Its function is as follows. Part of the high-affinity ATP-driven potassium transport (or Kdp) system, which catalyzes the hydrolysis of ATP coupled with the electrogenic transport of potassium into the cytoplasm. This subunit is responsible for energy coupling to the transport system and for the release of the potassium ions to the cytoplasm. The protein is Potassium-transporting ATPase ATP-binding subunit of Photorhabdus laumondii subsp. laumondii (strain DSM 15139 / CIP 105565 / TT01) (Photorhabdus luminescens subsp. laumondii).